The chain runs to 664 residues: MEGFMDSGTQTDAVVVLSLAQAAVLGLVSENELFGATISAEAFYPDLGPELSGAAMGEPEPPGPDVYQLACNGRALEEPAEEEVLEVEAACEKHTRRKTRPPVRLVPKVKFEKVEEEEQEVYEVSVPGDDKDAGPAEAPAEAASGGCDALVQSSAVKMIDLSAFSRKPRTLRHLPRTPRPELNVAPYDPHFPAPARDGFPEPSMALPGPEALPTECGFEPPHLAPLSDPEAPSMESPEPVKPEQGFVWQEASEFEADTAGSTVERHKKAQLDRLDINVQIDDSYLVEAGDRQKRWQCRMCEKSYTSKYNLVTHILGHNGIKPHSCPHCSKLFKQPSHLQTHLLTHQGTRPHKCQVCHKAFTQTSHLKRHMLLHSEVKPYSCHFCGRGFAYPSELKAHEVKHESGRCHVCVECGLDFSTLTQLKRHLASHQGPTLYQCLECDKSFHYRSQLQNHMLKHQNVRPFVCTECGMEFSQIHHLKQHSLTHKGVKEFKCEVCGREFTLQANMKRHMLIHTSVRPYQCHICFKTFVQKQTLKTHMIVHSPVKPFKCKVCGKSFNRMYNLLGHMHLHAGSKPFKCPYCSSKFNLKGNLSRHMKVKHGVMDIGLDSQDPMMELTGTDPSELDGQQEMEDFEENAYSYASVDSSAEASVLTEQAMKEMAYYNVL.

Glycyl lysine isopeptide (Lys-Gly) (interchain with G-Cter in SUMO2) cross-links involve residues lysine 110 and lysine 113. The segment at 121–141 (VYEVSVPGDDKDAGPAEAPAE) is disordered. 3 consecutive C2H2-type zinc fingers follow at residues 295–317 (WQCR…ILGH), 323–345 (HSCP…LLTH), and 351–373 (HKCQ…MLLH). Residue lysine 377 forms a Glycyl lysine isopeptide (Lys-Gly) (interchain with G-Cter in SUMO2) linkage. C2H2-type zinc fingers lie at residues 379 to 401 (YSCH…EVKH), 407 to 429 (HVCV…LASH), 435 to 457 (YQCL…MLKH), 463 to 485 (FVCT…SLTH), 491 to 513 (FKCE…MLIH), 519 to 541 (YQCH…MIVH), 547 to 569 (FKCK…MHLH), and 575 to 598 (FKCP…KVKH).

This sequence belongs to the krueppel C2H2-type zinc-finger protein family.

It localises to the nucleus. Its function is as follows. May be involved in transcriptional regulation. This Homo sapiens (Human) protein is Zinc finger protein 710 (ZNF710).